The sequence spans 460 residues: Allantoinase (460 aa).

Zn(2+)-binding residues include H70, H72, K157, H193, H250, and D323. K157 carries the N6-carboxylysine modification.

Belongs to the metallo-dependent hydrolases superfamily. Allantoinase family. In terms of assembly, homotetramer. Zn(2+) serves as cofactor. Carboxylation allows a single lysine to coordinate two zinc ions.

It carries out the reaction (S)-allantoin + H2O = allantoate + H(+). It participates in nitrogen metabolism; (S)-allantoin degradation; allantoate from (S)-allantoin: step 1/1. Catalyzes the conversion of allantoin (5-ureidohydantoin) to allantoic acid by hydrolytic cleavage of the five-member hydantoin ring. Involved in the utilization of purines as secondary nitrogen sources, when primary sources are limiting. In Saccharomyces cerevisiae (strain ATCC 204508 / S288c) (Baker's yeast), this protein is Allantoinase (DAL1).